The chain runs to 335 residues: S-adenosylmethionine decarboxylase proenzyme (335 aa).

Catalysis depends on residues Glu12 and Glu15. Ser70 acts as the Schiff-base intermediate with substrate; via pyruvic acid in catalysis. Position 70 is a pyruvic acid (Ser); by autocatalysis (Ser70). Catalysis depends on Cys84, which acts as the Proton donor; for catalytic activity. Active-site proton acceptor; for processing activity residues include Ser231 and His245.

It belongs to the eukaryotic AdoMetDC family. Pyruvate serves as cofactor. Is synthesized initially as an inactive proenzyme. Formation of the active enzyme involves a self-maturation process in which the active site pyruvoyl group is generated from an internal serine residue via an autocatalytic post-translational modification. Two non-identical subunits are generated from the proenzyme in this reaction, and the pyruvate is formed at the N-terminus of the alpha chain, which is derived from the carboxyl end of the proenzyme. The post-translation cleavage follows an unusual pathway, termed non-hydrolytic serinolysis, in which the side chain hydroxyl group of the serine supplies its oxygen atom to form the C-terminus of the beta chain, while the remainder of the serine residue undergoes an oxidative deamination to produce ammonia and the pyruvoyl group blocking the N-terminus of the alpha chain.

It catalyses the reaction S-adenosyl-L-methionine + H(+) = S-adenosyl 3-(methylsulfanyl)propylamine + CO2. It participates in amine and polyamine biosynthesis; S-adenosylmethioninamine biosynthesis; S-adenosylmethioninamine from S-adenosyl-L-methionine: step 1/1. In terms of biological role, essential for biosynthesis of the polyamines spermidine and spermine. Promotes maintenance and self-renewal of embryonic stem cells, by maintaining spermine levels. This chain is S-adenosylmethionine decarboxylase proenzyme (amd1), found in Xenopus laevis (African clawed frog).